The sequence spans 187 residues: Holliday junction resolvase (187 aa).

Belongs to the RuvC family. Poxviruses-type subfamily. Mg(2+) serves as cofactor. In terms of processing, acylated by palmitic acid group(s).

Its subcellular location is the membrane. Its function is as follows. Nuclease that specifically cleaves and resolves four-way DNA Holliday junctions into linear duplex products. The polypeptide is Holliday junction resolvase (Vaccinia virus (strain Ankara) (VACV)).